A 223-amino-acid chain; its full sequence is Small ribosomal subunit protein uS3 (223 aa).

Positions 38 to 106 (IKKYLKSKLA…EVHLNIVEIR (69 aa)) constitute a KH type-2 domain.

This sequence belongs to the universal ribosomal protein uS3 family. As to quaternary structure, part of the 30S ribosomal subunit. Forms a tight complex with proteins S10 and S14.

Its function is as follows. Binds the lower part of the 30S subunit head. Binds mRNA in the 70S ribosome, positioning it for translation. This Rhodospirillum rubrum (strain ATCC 11170 / ATH 1.1.1 / DSM 467 / LMG 4362 / NCIMB 8255 / S1) protein is Small ribosomal subunit protein uS3.